The chain runs to 316 residues: Ribosomal protein L11 methyltransferase (316 aa).

Residues Thr160, Gly181, Asp203, and Asn246 each contribute to the S-adenosyl-L-methionine site.

Belongs to the methyltransferase superfamily. PrmA family.

It localises to the cytoplasm. The catalysed reaction is L-lysyl-[protein] + 3 S-adenosyl-L-methionine = N(6),N(6),N(6)-trimethyl-L-lysyl-[protein] + 3 S-adenosyl-L-homocysteine + 3 H(+). Methylates ribosomal protein L11. This is Ribosomal protein L11 methyltransferase from Heliobacterium modesticaldum (strain ATCC 51547 / Ice1).